A 373-amino-acid chain; its full sequence is MEYDEEEVKVLKEVLSAFFLYRQYAHTITQQKRKSMSRLSFEHKDLLLQDSDNNFLKHLSRIDQCIEQNSVLAEAIANAAIPVFCSDFDQNELFHVNVDMMQKVSSTLKQIARDWSTECVEERRTTYAPFIEELNSLFPSDSIDRSKIRVLVPGSGLGRLAFDIAVEGFACQGNEFSYFMLLTSHFILNCVKQENQFLVYPYIHSFSNHVMRDDQVRSLNIPDAVPSQYLRNSQNFSMAAGDFLEVYGTEESRDSFQVVATCFFIDTTKNILDYLDTIKNCLVDGGYWINLGPLLYHFESEGTSNSNSDSQQQPFVELTLEQLFYVMDSMGFEVLKHNSVDTTYMGDKRSMLEWIYHPHYWVCRLQKSKLRFQ.

Gln110, Arg113, Gly154, Glu175, Asp242, Phe243, and Cys262 together coordinate S-adenosyl-L-methionine. Position 266 (Asp266) interacts with carnosine. An S-adenosyl-L-methionine-binding site is contributed by Tyr274. The carnosine site is built by His297 and Tyr356.

The protein belongs to the carnosine N-methyltransferase family.

Its subcellular location is the cytoplasm. It is found in the nucleus. It catalyses the reaction carnosine + S-adenosyl-L-methionine = anserine + S-adenosyl-L-homocysteine + H(+). N-methyltransferase that mediates the formation of anserine (beta-alanyl-N(Pi)-methyl-L-histidine) from carnosine. Also methylates other L-histidine-containing di- and tripeptides such as Gly-Gly-His, Gly-His and homocarnosine (GABA-His). In Schizosaccharomyces pombe (strain 972 / ATCC 24843) (Fission yeast), this protein is Carnosine N-methyltransferase.